We begin with the raw amino-acid sequence, 231 residues long: MSVIGLIGAMDEEVAVIKAWMTDVREQTIAGCDFFVGRFEGKDVVLLKSGIGKVNAAVSTTLLLSQFEPEYVINIGSAGGFDPELQVGDVVISDQVVHHDVDVTGFGYLMGQVPNMPATYAADETLVAEAKAALQKVTQVQAKVGLIGTGDSFMNDPVRVEAVRALFPELVAVEMEAAAVAQVCFKFGTPFVVVRSLSDIAGKESPQSFEEYLKVAAENSSLMIQQMLKGN.

The active-site Proton acceptor is Glu13. Substrate-binding positions include Gly79, Met154, and 175 to 176; that span reads ME. The active-site Proton donor is Asp199.

Belongs to the PNP/UDP phosphorylase family. MtnN subfamily.

The catalysed reaction is S-adenosyl-L-homocysteine + H2O = S-(5-deoxy-D-ribos-5-yl)-L-homocysteine + adenine. The enzyme catalyses S-methyl-5'-thioadenosine + H2O = 5-(methylsulfanyl)-D-ribose + adenine. It carries out the reaction 5'-deoxyadenosine + H2O = 5-deoxy-D-ribose + adenine. Its pathway is amino-acid biosynthesis; L-methionine biosynthesis via salvage pathway; S-methyl-5-thio-alpha-D-ribose 1-phosphate from S-methyl-5'-thioadenosine (hydrolase route): step 1/2. Its function is as follows. Catalyzes the irreversible cleavage of the glycosidic bond in both 5'-methylthioadenosine (MTA) and S-adenosylhomocysteine (SAH/AdoHcy) to adenine and the corresponding thioribose, 5'-methylthioribose and S-ribosylhomocysteine, respectively. Also cleaves 5'-deoxyadenosine, a toxic by-product of radical S-adenosylmethionine (SAM) enzymes, into 5-deoxyribose and adenine. This chain is 5'-methylthioadenosine/S-adenosylhomocysteine nucleosidase, found in Marinomonas sp. (strain MWYL1).